The primary structure comprises 377 residues: Dehydrogenase/reductase SDR family member 13 (377 aa).

The N-terminal stretch at 1–25 is a signal peptide; sequence MEALLLGAGLLLGAYVLVYYNLVKA. Residues serine 46 and isoleucine 48 each coordinate NAD(+). Serine 170 provides a ligand contact to substrate. Positions 197, 201, and 232 each coordinate NAD(+). The Proton acceptor role is filled by tyrosine 197. The disordered stretch occupies residues 309–377; it reads RLAGLGPGED…AKVEPEIQLS (69 aa). Residues 317 to 331 are compositionally biased toward acidic residues; the sequence is EDAEPDEDPQSEDSE. Residues 347 to 357 are compositionally biased toward low complexity; the sequence is SQPYPSPQSSP. Positions 368–377 are enriched in basic and acidic residues; that stretch reads AKVEPEIQLS.

It belongs to the short-chain dehydrogenases/reductases (SDR) family.

It is found in the secreted. Functionally, putative oxidoreductase. The protein is Dehydrogenase/reductase SDR family member 13 of Homo sapiens (Human).